Here is a 156-residue protein sequence, read N- to C-terminus: Small ribosomal subunit protein uS7 (156 aa).

The protein belongs to the universal ribosomal protein uS7 family. In terms of assembly, part of the 30S ribosomal subunit. Contacts proteins S9 and S11.

In terms of biological role, one of the primary rRNA binding proteins, it binds directly to 16S rRNA where it nucleates assembly of the head domain of the 30S subunit. Is located at the subunit interface close to the decoding center, probably blocks exit of the E-site tRNA. This Bacillus cereus (strain B4264) protein is Small ribosomal subunit protein uS7.